Here is a 688-residue protein sequence, read N- to C-terminus: Translation initiation factor IF-2 (688 aa).

The segment at 62 to 103 is disordered; the sequence is EFEVEEKVVRSKKNSNKKKKKGKGNEDKRQDNFAGRQQTQIV. Basic residues predominate over residues 71 to 83; that stretch reads RSKKNSNKKKKKG. The tr-type G domain maps to 190–359; it reads ERPAVVTIMG…LLVSEVEEYK (170 aa). Positions 199 to 206 are G1; that stretch reads GHVDHGKT. 199–206 is a GTP binding site; the sequence is GHVDHGKT. The tract at residues 224 to 228 is G2; it reads GITQH. Positions 245–248 are G3; the sequence is DTPG. GTP contacts are provided by residues 245 to 249 and 299 to 302; these read DTPGH and NKMD. The segment at 299-302 is G4; it reads NKMD. Residues 335 to 337 form a G5 region; it reads SAI.

This sequence belongs to the TRAFAC class translation factor GTPase superfamily. Classic translation factor GTPase family. IF-2 subfamily.

The protein localises to the cytoplasm. Its function is as follows. One of the essential components for the initiation of protein synthesis. Protects formylmethionyl-tRNA from spontaneous hydrolysis and promotes its binding to the 30S ribosomal subunits. Also involved in the hydrolysis of GTP during the formation of the 70S ribosomal complex. This is Translation initiation factor IF-2 from Bacillus cereus (strain G9842).